Here is a 477-residue protein sequence, read N- to C-terminus: MGQAATHVDANYTLINYTEEVIEDDRDACAVADDPKYPSSFGITLAVPEWEAICTAIVLTLIIISTIVGNILVILSVFTYKPLRIVQNFFIVSLAVADLTVAILVLPLNVAYSILGQWVFGIYVCKMWLTCDIMCCTSSILNLCAIALDRYWAITDPINYAQKRTLERVLLMIGVVWVLSLIISSPPLLGWNDWPDVFEPDTPCRLTSQPGFVIFSSSGSFYIPLVIMTVVYFEIYLATKKRLRDRAKATKISTISSGQNKYNNKDDHHDQDSVSSEANHNEHQGVTRLVSDNEKKKRTRKLTPKKKPKRKYWSKDDKSQNKLIIPILSNENSVTDMGENLENRNTSSESNSKETHEDDLIEVNETVPVKTHHKKPKPNQQSAVYQFIEEKQRISLTRERRAARTLGIIMGVFVVCWLPFFVIYLVIPFCASCCLSNKFINFITWLGYCNSALNPLIYTIFNMDFRRAFKKLLCMKP.

At 1–55 the chain is on the extracellular side; that stretch reads MGQAATHVDANYTLINYTEEVIEDDRDACAVADDPKYPSSFGITLAVPEWEAICT. N-linked (GlcNAc...) asparagine glycans are attached at residues N11 and N16. Residues 56–78 traverse the membrane as a helical segment; it reads AIVLTLIIISTIVGNILVILSVF. The Cytoplasmic portion of the chain corresponds to 79–88; the sequence is TYKPLRIVQN. Residues 89–110 form a helical membrane-spanning segment; it reads FFIVSLAVADLTVAILVLPLNV. At 111–127 the chain is on the extracellular side; that stretch reads AYSILGQWVFGIYVCKM. Residues 128 to 148 traverse the membrane as a helical segment; that stretch reads WLTCDIMCCTSSILNLCAIAL. Topologically, residues 149 to 168 are cytoplasmic; the sequence is DRYWAITDPINYAQKRTLER. A helical membrane pass occupies residues 169-191; that stretch reads VLLMIGVVWVLSLIISSPPLLGW. Topologically, residues 192–216 are extracellular; the sequence is NDWPDVFEPDTPCRLTSQPGFVIFS. Residues 217–238 traverse the membrane as a helical segment; sequence SSGSFYIPLVIMTVVYFEIYLA. Residues 239 to 405 lie on the Cytoplasmic side of the membrane; sequence TKKRLRDRAK…LTRERRAART (167 aa). 2 disordered regions span residues 256 to 317 and 334 to 358; these read SSGQ…SKDD and VTDMGENLENRNTSSESNSKETHED. 2 stretches are compositionally biased toward basic and acidic residues: residues 263–272 and 279–295; these read NNKDDHHDQD and NHNEHQGVTRLVSDNEK. A compositionally biased stretch (basic residues) spans 296–312; sequence KKRTRKLTPKKKPKRKY. A helical membrane pass occupies residues 406–427; the sequence is LGIIMGVFVVCWLPFFVIYLVI. Over 428-439 the chain is Extracellular; it reads PFCASCCLSNKF. Residues 440–460 form a helical membrane-spanning segment; the sequence is INFITWLGYCNSALNPLIYTI. The Cytoplasmic portion of the chain corresponds to 461 to 477; sequence FNMDFRRAFKKLLCMKP.

It belongs to the G-protein coupled receptor 1 family.

It localises to the cell membrane. In terms of biological role, receptor for octopamine. Octopamine (OA) is a neurotransmitter, neurohormone, and neuromodulator in invertebrates. The activity of this receptor is mediated by G proteins which activate adenylyl cyclase. In Heliothis virescens (Tobacco budworm moth), this protein is Octopamine receptor.